The chain runs to 131 residues: NADPH-dependent 7-cyano-7-deazaguanine reductase (131 aa).

The active-site Thioimide intermediate is the Cys-48. The active-site Proton donor is Asp-55. Substrate is bound by residues 70–72 (VEL) and 89–90 (QE).

It belongs to the GTP cyclohydrolase I family. QueF type 1 subfamily.

The protein localises to the cytoplasm. It carries out the reaction 7-aminomethyl-7-carbaguanine + 2 NADP(+) = 7-cyano-7-deazaguanine + 2 NADPH + 3 H(+). Its pathway is tRNA modification; tRNA-queuosine biosynthesis. Its function is as follows. Catalyzes the NADPH-dependent reduction of 7-cyano-7-deazaguanine (preQ0) to 7-aminomethyl-7-deazaguanine (preQ1). This Caldicellulosiruptor bescii (strain ATCC BAA-1888 / DSM 6725 / KCTC 15123 / Z-1320) (Anaerocellum thermophilum) protein is NADPH-dependent 7-cyano-7-deazaguanine reductase.